The primary structure comprises 209 residues: Uridine kinase (209 aa).

Residue 12-19 (GGSGSGKT) participates in ATP binding.

The protein belongs to the uridine kinase family.

The protein localises to the cytoplasm. It catalyses the reaction uridine + ATP = UMP + ADP + H(+). The catalysed reaction is cytidine + ATP = CMP + ADP + H(+). Its pathway is pyrimidine metabolism; CTP biosynthesis via salvage pathway; CTP from cytidine: step 1/3. It functions in the pathway pyrimidine metabolism; UMP biosynthesis via salvage pathway; UMP from uridine: step 1/1. The chain is Uridine kinase from Listeria welshimeri serovar 6b (strain ATCC 35897 / DSM 20650 / CCUG 15529 / CIP 8149 / NCTC 11857 / SLCC 5334 / V8).